Consider the following 252-residue polypeptide: tRNA pseudouridine synthase A (252 aa).

D52 (nucleophile) is an active-site residue. Residue Y111 participates in substrate binding.

This sequence belongs to the tRNA pseudouridine synthase TruA family. In terms of assembly, homodimer.

It carries out the reaction uridine(38/39/40) in tRNA = pseudouridine(38/39/40) in tRNA. Its function is as follows. Formation of pseudouridine at positions 38, 39 and 40 in the anticodon stem and loop of transfer RNAs. This Parabacteroides distasonis (strain ATCC 8503 / DSM 20701 / CIP 104284 / JCM 5825 / NCTC 11152) protein is tRNA pseudouridine synthase A.